The sequence spans 412 residues: Argininosuccinate synthase (412 aa).

ATP contacts are provided by residues 16-24 (AYSGGLDTS) and A44. L-citrulline contacts are provided by Y96 and S101. G126 is an ATP binding site. T128, N132, and D133 together coordinate L-aspartate. L-citrulline is bound at residue N132. L-citrulline-binding residues include R136, S185, S194, E270, and Y282.

Belongs to the argininosuccinate synthase family. Type 1 subfamily. As to quaternary structure, homotetramer.

The protein localises to the cytoplasm. It carries out the reaction L-citrulline + L-aspartate + ATP = 2-(N(omega)-L-arginino)succinate + AMP + diphosphate + H(+). It functions in the pathway amino-acid biosynthesis; L-arginine biosynthesis; L-arginine from L-ornithine and carbamoyl phosphate: step 2/3. The chain is Argininosuccinate synthase from Shewanella baltica (strain OS185).